The primary structure comprises 134 residues: Profilin-4 (134 aa).

Cysteine 13 and cysteine 118 are disulfide-bonded. An Involved in PIP2 interaction motif is present at residues 84–100 (AVIRGKKGSGGITIKKT). Threonine 114 bears the Phosphothreonine mark.

Belongs to the profilin family. Occurs in many kinds of cells as a complex with monomeric actin in a 1:1 ratio. Post-translationally, phosphorylated by MAP kinases.

The protein localises to the cytoplasm. Its subcellular location is the cytoskeleton. Functionally, binds to actin and affects the structure of the cytoskeleton. At high concentrations, profilin prevents the polymerization of actin, whereas it enhances it at low concentrations. This Olea europaea (Common olive) protein is Profilin-4.